The sequence spans 307 residues: Phosphonates import ATP-binding protein PhnC (307 aa).

The ABC transporter domain maps to 4–252 (IRIERLSKTF…RLHALYGDDA (249 aa)). Residue 37-44 (GASGSGKS) coordinates ATP. Positions 265-275 (AAREAAGEPAR) are enriched in basic and acidic residues. Positions 265 to 307 (AAREAAGEPARRAPAAFDSAGSPDLPDSQPASPRRMLAASSMR) are disordered.

The protein belongs to the ABC transporter superfamily. Phosphonates importer (TC 3.A.1.9.1) family. As to quaternary structure, the complex is composed of two ATP-binding proteins (PhnC), two transmembrane proteins (PhnE) and a solute-binding protein (PhnD).

It localises to the cell inner membrane. The enzyme catalyses phosphonate(out) + ATP + H2O = phosphonate(in) + ADP + phosphate + H(+). Part of the ABC transporter complex PhnCDE involved in phosphonates import. Responsible for energy coupling to the transport system. The polypeptide is Phosphonates import ATP-binding protein PhnC (Burkholderia pseudomallei (strain 1710b)).